The sequence spans 257 residues: MIIMKKIGILEIVVILSILITSVSLAYKFYSNNGNDYEFDGNQMYKCAWVCEKILNKNFPLNATIIGKWTLSKKPFNGEVKIYDAKGGTLYAIYNGTPITIGGELAYQEDIAAKKIILHPIGKSIIFYELNPIEGKSFRDIANEIENTTKNFNGLNIVDVIVEGSMGVDSKTYTPVERQKIMNNLDVDIKKGLGLYFVDYGIIINGKIHLNTLKNLDNYINSSNISTSKLTIYVVVNNSIDEIPNKIKENYAIITLG.

Residues 7 to 27 (IGILEIVVILSILITSVSLAY) form a helical membrane-spanning segment.

It is found in the membrane. This is an uncharacterized protein from Methanocaldococcus jannaschii (strain ATCC 43067 / DSM 2661 / JAL-1 / JCM 10045 / NBRC 100440) (Methanococcus jannaschii).